The following is a 335-amino-acid chain: Probable cytosolic iron-sulfur protein assembly protein Ciao1 (335 aa).

7 WD repeats span residues 12-51, 57-96, 101-140, 146-185, 192-231, 250-289, and 301-335; these read GHKG…WSTK, GHKR…FECN, GHEN…EFEC, SHTQ…NDWD, SHTS…NSAG, QHSR…KPDE, and AHDQ…KVTE.

This sequence belongs to the WD repeat CIA1 family.

Its function is as follows. Essential component of the cytosolic iron-sulfur (Fe/S) protein assembly machinery. Required for the maturation of extramitochondrial Fe/S proteins. The polypeptide is Probable cytosolic iron-sulfur protein assembly protein Ciao1 (Drosophila yakuba (Fruit fly)).